The following is a 189-amino-acid chain: Protein Rex (189 aa).

A compositionally biased stretch (basic residues) spans 1-16 (MPKTRRGPRRSQRKRP). Positions 1–26 (MPKTRRGPRRSQRKRPPTPWPTSQGL) are disordered. Residues 2 to 18 (PKTRRGPRRSQRKRPPT) carry the Nuclear localization signal, and RNA-binding (RxRE) motif. The tract at residues 56 to 70 (RPAYIVTPYWPPVQS) is homomultimerization. A Phosphoserine; by host modification is found at serine 70. The Nuclear export signal motif lies at 82–93 (LSAQLYSSLSLG). The interval 87 to 189 (YSSLSLGSPP…PPSPGPSCPR (103 aa)) is disordered. Residues 115-125 (IQPPTFHPPSS) are compositionally biased toward pro residues. Residues 123 to 131 (PSSRPYANT) are homomultimerization. Threonine 174 bears the Phosphothreonine; by host mark. Residue serine 177 is modified to Phosphoserine; by host. A compositionally biased stretch (pro residues) spans 178-189 (FPPPSPGPSCPR).

Belongs to the deltaretrovirus Rex protein family. As to quaternary structure, homomultimer. Multimeric assembly is essential for activity and involves XPO1. Binds to human XPO1 and KPNB1. Interacts (via N-terminal nuclear localization signal) with human NPM1. In terms of processing, phosphorylated.

It localises to the host nucleus. The protein localises to the host nucleolus. It is found in the host cytoplasm. In terms of biological role, rex escorts unspliced gag-pro-pol and singly spliced env mRNAs out of the nucleus of infected cells. These mRNAs carry a recognition sequence called Rex responsive element (RxRE or XRE) located at the 3' region of the long terminal repeat (LTR). This function is essential since most HTLV proteins are translated from unspliced or partially spliced pre-mRNAs that cannot exit the nucleus by the pathway used by fully processed cellular mRNAs. Rex itself is translated from a fully spliced mRNA that probably readily exits the nucleus. Rex's nuclear localization signal (NLS) binds directly to KPNB1/importin beta-1 without previous binding to KPNA1/importin alpha-1. KPNB1 binds to the GDP bound form of RAN (Ran-GDP) and targets Rex to the nucleus. In the nucleus, the conversion from Ran-GDP to Ran-GTP dissociates Rex from KPNB1 and allows Rex's binding to the RRE in viral pre-mRNAs. Rex multimerizes on the RRE via cooperative assembly. This multimerization is critical for its full biological activity, since it may shield the viral RNA from being spliced or down-regulated, and probably exposes Rex's nuclear export signal (NES) to the surface. Rex can then form a complex with XPO1/CRM1, RANBP3 and Ran-GTP, leading to nuclear export of the complex. Conversion from Ran-GTP to Ran-GDP mediates dissociation of the Rex/RRE/XPO1/RANBP3/RAN complex, so that Rex can return to the nucleus for a subsequent round of export. The polypeptide is Protein Rex (Homo sapiens (Human)).